A 137-amino-acid chain; its full sequence is uncharacterized protein (137 aa).

It belongs to the DCC thiol-disulfide oxidoreductase family.

This is an uncharacterized protein from Bacillus subtilis (strain 168).